Reading from the N-terminus, the 568-residue chain is Peroxisomal leader peptide-processing protease (568 aa).

The segment at Thr332–Leu568 is serine protease. Active-site charge relay system residues include His374, Asp410, and Ser483.

It belongs to the peptidase S1B family. As to quaternary structure, homodimer. Forms a heterodimer with the C-terminal cleavage product (49 kDa form). Forms a heterodimer with the N-terminal cleavage product (10 kDa form). Interacts with PEX5. Interacts with LONP2. Post-translationally, self-cleavage gives rise to an N-terminal 10-kDa fragment and C-terminal 49-kDa fragment upon import into the peroxisomes. The full-lengh TYSND1 is the active the proteolytic processing of PTS1- and PTS2-proteins and in self-cleavage, and intermolecular self-cleavage of TYSND1 down-regulates its protease activity.

The protein localises to the peroxisome. Its activity is regulated as follows. Inhibited by N-ethylmaleimide (NEM). Not affected by leupeptin or trans-epoxysuccinyl-l-leucylamido-(4-gianidino) butane (E64). Its function is as follows. Peroxisomal protease that mediates both the removal of the leader peptide from proteins containing a PTS2 target sequence and processes several PTS1-containing proteins. Catalyzes the processing of PTS1-proteins involved in the peroxisomal beta-oxidation of fatty acids. This chain is Peroxisomal leader peptide-processing protease (Tysnd1), found in Mus musculus (Mouse).